The chain runs to 331 residues: Myc-associated zinc finger protein (331 aa).

2 disordered regions span residues 46 to 65 (AQSPFQAAPAPPPTPQAPAA) and 108 to 131 (TVDTAALKQPPAPPPPPPAVSAPA). The segment covering 117–127 (PPAPPPPPPAV) has biased composition (pro residues). 4 C2H2-type zinc fingers span residues 177 to 199 (YICALCAKEFKNGYNLRRHEAIH), 266 to 288 (HACEMCGKAFRDVYHLNRHKLSH), 294 to 316 (YQCPVCQQRFKRKDRMSYHVRSH), and 324 to 331 (YNCSHCGK).

Interacts with BPTF. As to expression, ubiquitously expressed.

It is found in the nucleus. Functionally, transcriptional regulator. Acts as a transcriptional activator that binds to purine-rich GAGA sites found in the promoter of many genes including insulin I and II and islet amyloid polypeptide. The protein is Myc-associated zinc finger protein (MAZ) of Mesocricetus auratus (Golden hamster).